The following is a 72-amino-acid chain: Translation initiation factor IF-1 (72 aa).

The region spanning 1 to 72 is the S1-like domain; that stretch reads MAKKDVIELE…TRGRITWRKK (72 aa).

Belongs to the IF-1 family. Component of the 30S ribosomal translation pre-initiation complex which assembles on the 30S ribosome in the order IF-2 and IF-3, IF-1 and N-formylmethionyl-tRNA(fMet); mRNA recruitment can occur at any time during PIC assembly.

The protein resides in the cytoplasm. In terms of biological role, one of the essential components for the initiation of protein synthesis. Stabilizes the binding of IF-2 and IF-3 on the 30S subunit to which N-formylmethionyl-tRNA(fMet) subsequently binds. Helps modulate mRNA selection, yielding the 30S pre-initiation complex (PIC). Upon addition of the 50S ribosomal subunit IF-1, IF-2 and IF-3 are released leaving the mature 70S translation initiation complex. This chain is Translation initiation factor IF-1, found in Clostridioides difficile (strain 630) (Peptoclostridium difficile).